We begin with the raw amino-acid sequence, 112 residues long: Putative pterin-4-alpha-carbinolamine dehydratase (112 aa).

This sequence belongs to the pterin-4-alpha-carbinolamine dehydratase family.

The enzyme catalyses (4aS,6R)-4a-hydroxy-L-erythro-5,6,7,8-tetrahydrobiopterin = (6R)-L-erythro-6,7-dihydrobiopterin + H2O. The protein is Putative pterin-4-alpha-carbinolamine dehydratase of Shewanella baltica (strain OS223).